A 230-amino-acid chain; its full sequence is Secretory carrier-associated membrane protein 4 (230 aa).

Topologically, residues 1–39 (MAGKENNFPPLPHFLPLKPCFYQDFSDEIPVEHQVLVKR) are cytoplasmic. The next 4 helical transmembrane spans lie at 40-60 (IYRLWMFYCTTLGVNLVACLA), 61-81 (WWIAGGAGANFGLAMLWLVLF), 106-126 (MAFFFIFGAQFVLTVIQAIGF), and 149-169 (VVMLIPAIMFSLSAVVMAITI). The Cytoplasmic portion of the chain corresponds to 170–230 (VKVHRIYRGA…SYSTSGSQWP (61 aa)). T194 carries the post-translational modification Phosphothreonine. The tract at residues 197–230 (NPPSREAQFNSFSGNSLPEYPTVPSYSTSGSQWP) is disordered. Polar residues-rich tracts occupy residues 203-212 (AQFNSFSGNS) and 220-230 (PSYSTSGSQWP).

The protein belongs to the SCAMP family.

Its subcellular location is the membrane. Functionally, probably involved in membrane protein trafficking. This Rattus norvegicus (Rat) protein is Secretory carrier-associated membrane protein 4 (Scamp4).